Consider the following 198-residue polypeptide: ATP-dependent Clp protease proteolytic subunit 2 (198 aa).

Serine 94 acts as the Nucleophile in catalysis. The active site involves histidine 119.

This sequence belongs to the peptidase S14 family. In terms of assembly, fourteen ClpP subunits assemble into 2 heptameric rings which stack back to back to give a disk-like structure with a central cavity, resembling the structure of eukaryotic proteasomes.

Its subcellular location is the cytoplasm. It catalyses the reaction Hydrolysis of proteins to small peptides in the presence of ATP and magnesium. alpha-casein is the usual test substrate. In the absence of ATP, only oligopeptides shorter than five residues are hydrolyzed (such as succinyl-Leu-Tyr-|-NHMec, and Leu-Tyr-Leu-|-Tyr-Trp, in which cleavage of the -Tyr-|-Leu- and -Tyr-|-Trp bonds also occurs).. In terms of biological role, cleaves peptides in various proteins in a process that requires ATP hydrolysis. Has a chymotrypsin-like activity. Plays a major role in the degradation of misfolded proteins. This Borreliella burgdorferi (strain ATCC 35210 / DSM 4680 / CIP 102532 / B31) (Borrelia burgdorferi) protein is ATP-dependent Clp protease proteolytic subunit 2.